Consider the following 68-residue polypeptide: uncharacterized protein (68 aa).

2 helical membrane-spanning segments follow: residues 1-21 (MLFIPPPLLCLFIAIAMYFLP) and 28-48 (VHFSVIVFVISLSFLIALSSV).

Its subcellular location is the cell membrane. This is an uncharacterized protein from Haemophilus influenzae (strain ATCC 51907 / DSM 11121 / KW20 / Rd).